We begin with the raw amino-acid sequence, 325 residues long: Heat-inducible transcription repressor HrcA (325 aa).

It belongs to the HrcA family.

In terms of biological role, negative regulator of class I heat shock genes (grpE-dnaK-dnaJ and groELS operons). Prevents heat-shock induction of these operons. This chain is Heat-inducible transcription repressor HrcA, found in Staphylococcus aureus (strain bovine RF122 / ET3-1).